Consider the following 367-residue polypeptide: Selenoprotein Pa (367 aa).

Residues methionine 1–alanine 19 form the signal peptide. A non-standard amino acid (selenocysteine) is located at residue selenocysteine 59. Asparagine 109 is a glycosylation site (N-linked (GlcNAc...) asparagine). Residues glutamate 191 to arginine 220 show a composition bias toward basic and acidic residues. Residues glutamate 191–valine 241 form a disordered region. Positions histidine 221 to glycine 237 are enriched in basic residues. Residues selenocysteine 267, selenocysteine 273, selenocysteine 279, selenocysteine 290, selenocysteine 292, selenocysteine 294, selenocysteine 310, selenocysteine 320, selenocysteine 322, selenocysteine 336, selenocysteine 338, selenocysteine 346, selenocysteine 353, selenocysteine 355, selenocysteine 362, and selenocysteine 364 are each a non-standard amino acid (selenocysteine). A disordered region spans residues leucine 309–lysine 367. The segment covering lysine 326 to selenocysteine 336 has biased composition (basic and acidic residues).

The protein belongs to the selenoprotein P family.

The protein localises to the secreted. Functionally, might be responsible for some of the extracellular antioxidant defense properties of selenium or might be involved in the transport of selenium. This chain is Selenoprotein Pa (sepp1a), found in Danio rerio (Zebrafish).